Reading from the N-terminus, the 93-residue chain is Small ribosomal subunit protein uS19 (93 aa).

This sequence belongs to the universal ribosomal protein uS19 family.

In terms of biological role, protein S19 forms a complex with S13 that binds strongly to the 16S ribosomal RNA. This is Small ribosomal subunit protein uS19 from Geotalea daltonii (strain DSM 22248 / JCM 15807 / FRC-32) (Geobacter daltonii).